We begin with the raw amino-acid sequence, 504 residues long: Cytochrome P450 2D9 (504 aa).

At Ser249 the chain carries Phosphoserine. Residue Cys446 participates in heme binding.

This sequence belongs to the cytochrome P450 family. Heme is required as a cofactor.

It localises to the endoplasmic reticulum membrane. It is found in the microsome membrane. It carries out the reaction an organic molecule + reduced [NADPH--hemoprotein reductase] + O2 = an alcohol + oxidized [NADPH--hemoprotein reductase] + H2O + H(+). Cytochromes P450 are a group of heme-thiolate monooxygenases. In liver microsomes, this enzyme is involved in an NADPH-dependent electron transport pathway. It oxidizes a variety of structurally unrelated compounds, including steroids, fatty acids, and xenobiotics. This chain is Cytochrome P450 2D9 (Cyp2d9), found in Mus musculus (Mouse).